The sequence spans 1368 residues: DNA-directed RNA polymerase subunit beta (1368 aa).

Belongs to the RNA polymerase beta chain family. The RNAP catalytic core consists of 2 alpha, 1 beta, 1 beta' and 1 omega subunit. When a sigma factor is associated with the core the holoenzyme is formed, which can initiate transcription.

It carries out the reaction RNA(n) + a ribonucleoside 5'-triphosphate = RNA(n+1) + diphosphate. Its function is as follows. DNA-dependent RNA polymerase catalyzes the transcription of DNA into RNA using the four ribonucleoside triphosphates as substrates. The chain is DNA-directed RNA polymerase subunit beta from Burkholderia cenocepacia (strain HI2424).